The chain runs to 378 residues: Lactosylceramide 1,3-N-acetyl-beta-D-glucosaminyltransferase (378 aa).

Residues 1 to 14 lie on the Cytoplasmic side of the membrane; sequence MRMLVSGRRVKKWQ. A helical; Signal-anchor for type II membrane protein membrane pass occupies residues 15 to 35; that stretch reads LIIQLFATCFLASLMFFWEPI. Over 36 to 378 the chain is Lumenal; sequence DNHIVSHMKS…DTYPCRAAFI (343 aa). Residue Asn-59 is glycosylated (N-linked (GlcNAc...) asparagine).

It belongs to the glycosyltransferase 31 family. In terms of tissue distribution, widely expressed. Highly expressed in lung, colon, placenta, testis, pituitary gland and cerebellum. Weakly expressed in brain, liver, spleen, lymph node and thymus.

The protein localises to the golgi apparatus membrane. The catalysed reaction is a beta-D-Gal-(1-&gt;4)-beta-D-Glc-(1&lt;-&gt;1)-Cer(d18:1(4E)) + UDP-N-acetyl-alpha-D-glucosamine = a beta-D-GlcNAc-(1-&gt;3)-beta-D-Gal-(1-&gt;4)-beta-D-Glc-(1&lt;-&gt;1)-Cer(d18:1(4E)) + UDP + H(+). It carries out the reaction a neolactoside nLc4Cer(d18:1(4E)) + UDP-N-acetyl-alpha-D-glucosamine = a neolactoside IV(3)-beta-GlcNAc-nLc4Cer(d18:1(4E)) + UDP + H(+). It functions in the pathway protein modification; protein glycosylation. Functionally, beta-1,3-N-acetylglucosaminyltransferase that plays a key role in the synthesis of lacto- or neolacto-series carbohydrate chains on glycolipids, notably by participating in biosynthesis of HNK-1 and Lewis X carbohydrate structures. Has strong activity toward lactosylceramide (LacCer) and neolactotetraosylceramide (nLc(4)Cer; paragloboside), resulting in the synthesis of Lc(3)Cer and neolactopentaosylceramide (nLc(5)Cer), respectively. Probably plays a central role in regulating neolacto-series glycolipid synthesis during embryonic development. The protein is Lactosylceramide 1,3-N-acetyl-beta-D-glucosaminyltransferase of Homo sapiens (Human).